Reading from the N-terminus, the 398-residue chain is Succinate--CoA ligase [ADP-forming] subunit beta (398 aa).

In terms of domain architecture, ATP-grasp spans 9-254; sequence KRLLHEYGAP…LSEEDPKEIE (246 aa). Residues Lys-46, 53–55, Glu-109, Ala-112, and Glu-117 each bind ATP; that span reads GRG. Residues Asn-209 and Asp-223 each coordinate Mg(2+). Substrate contacts are provided by residues Asn-274 and 331-333; that span reads GIM.

This sequence belongs to the succinate/malate CoA ligase beta subunit family. Heterotetramer of two alpha and two beta subunits. The cofactor is Mg(2+).

It carries out the reaction succinate + ATP + CoA = succinyl-CoA + ADP + phosphate. The catalysed reaction is GTP + succinate + CoA = succinyl-CoA + GDP + phosphate. Its pathway is carbohydrate metabolism; tricarboxylic acid cycle; succinate from succinyl-CoA (ligase route): step 1/1. In terms of biological role, succinyl-CoA synthetase functions in the citric acid cycle (TCA), coupling the hydrolysis of succinyl-CoA to the synthesis of either ATP or GTP and thus represents the only step of substrate-level phosphorylation in the TCA. The beta subunit provides nucleotide specificity of the enzyme and binds the substrate succinate, while the binding sites for coenzyme A and phosphate are found in the alpha subunit. This Bartonella tribocorum (strain CIP 105476 / IBS 506) protein is Succinate--CoA ligase [ADP-forming] subunit beta.